A 934-amino-acid polypeptide reads, in one-letter code: Serine/threonine-protein kinase PknD (934 aa).

Residues 4-296 enclose the Protein kinase domain; sequence YELIRLIGKG…ELRQALQPYL (293 aa). Residues 10–18 and lysine 33 each bind ATP; that span reads IGKGGMGEV. Catalysis depends on aspartate 138, which acts as the Proton acceptor.

It belongs to the protein kinase superfamily. Ser/Thr protein kinase family. In terms of assembly, interacts with Pkn1. In terms of processing, autophosphorylated on serine and threonine residues. Present in elementary bodies 40 hours post-infection as 2 bands of approximately 55 to 60 and 45 to 50 kDa, which may be due to differential phosphorylation as well as degradation; an enzymatically active full-length protein can also be detected.

The enzyme catalyses L-seryl-[protein] + ATP = O-phospho-L-seryl-[protein] + ADP + H(+). It catalyses the reaction L-threonyl-[protein] + ATP = O-phospho-L-threonyl-[protein] + ADP + H(+). Together with the serine/threonine kinase Pkn1, may play a role in the specific interactions with host proteins during intracellular growth. Autophosphorylates and also phosphorylates Pkn1. The protein is Serine/threonine-protein kinase PknD of Chlamydia trachomatis serovar L2 (strain ATCC VR-902B / DSM 19102 / 434/Bu).